The sequence spans 225 residues: Uracil-DNA glycosylase (225 aa).

The active-site Proton acceptor is the Asp65.

It belongs to the uracil-DNA glycosylase (UDG) superfamily. UNG family.

It is found in the cytoplasm. It catalyses the reaction Hydrolyzes single-stranded DNA or mismatched double-stranded DNA and polynucleotides, releasing free uracil.. Excises uracil residues from the DNA which can arise as a result of misincorporation of dUMP residues by DNA polymerase or due to deamination of cytosine. In Anoxybacillus flavithermus (strain DSM 21510 / WK1), this protein is Uracil-DNA glycosylase.